The sequence spans 501 residues: Cytochrome P450 2J5 (501 aa).

C447 serves as a coordination point for heme.

The protein belongs to the cytochrome P450 family. It depends on heme as a cofactor.

The protein resides in the endoplasmic reticulum membrane. The protein localises to the microsome membrane. The enzyme catalyses an organic molecule + reduced [NADPH--hemoprotein reductase] + O2 = an alcohol + oxidized [NADPH--hemoprotein reductase] + H2O + H(+). This chain is Cytochrome P450 2J5 (Cyp2j5), found in Mus musculus (Mouse).